Consider the following 94-residue polypeptide: DNA gyrase subunit A (94 aa).

The Topo IIA-type catalytic domain maps to 35-94; that stretch reads LPDVRDGLKPVHRRILYGLNEQGMTPDKPYKKSARIVGDVMGKYHPHGDSSIYEAMVRMA.

The protein belongs to the type II topoisomerase GyrA/ParC subunit family. As to quaternary structure, heterotetramer, composed of two GyrA and two GyrB chains. In the heterotetramer, GyrA contains the active site tyrosine that forms a transient covalent intermediate with DNA, while GyrB binds cofactors and catalyzes ATP hydrolysis.

Its subcellular location is the cytoplasm. It carries out the reaction ATP-dependent breakage, passage and rejoining of double-stranded DNA.. A type II topoisomerase that negatively supercoils closed circular double-stranded (ds) DNA in an ATP-dependent manner to modulate DNA topology and maintain chromosomes in an underwound state. Negative supercoiling favors strand separation, and DNA replication, transcription, recombination and repair, all of which involve strand separation. Also able to catalyze the interconversion of other topological isomers of dsDNA rings, including catenanes and knotted rings. Type II topoisomerases break and join 2 DNA strands simultaneously in an ATP-dependent manner. The chain is DNA gyrase subunit A from Staphylococcus epidermidis.